Here is a 488-residue protein sequence, read N- to C-terminus: 3-octaprenyl-4-hydroxybenzoate carboxy-lyase (488 aa).

N172 is a Mn(2+) binding site. Prenylated FMN contacts are provided by residues 175 to 177 (IYR), 189 to 191 (RWL), and 194 to 195 (RG). A Mn(2+)-binding site is contributed by E238. D287 functions as the Proton donor in the catalytic mechanism.

Belongs to the UbiD family. Homohexamer. Prenylated FMN is required as a cofactor. The cofactor is Mn(2+).

The protein resides in the cell membrane. The enzyme catalyses a 4-hydroxy-3-(all-trans-polyprenyl)benzoate + H(+) = a 2-(all-trans-polyprenyl)phenol + CO2. The protein operates within cofactor biosynthesis; ubiquinone biosynthesis. Catalyzes the decarboxylation of 3-octaprenyl-4-hydroxy benzoate to 2-octaprenylphenol, an intermediate step in ubiquinone biosynthesis. The polypeptide is 3-octaprenyl-4-hydroxybenzoate carboxy-lyase (Ectopseudomonas mendocina (strain ymp) (Pseudomonas mendocina)).